The chain runs to 61 residues: uncharacterized protein (61 aa).

The segment at 39–61 (PRPFTPGLADPRRLGPRRVQAAQ) is disordered.

This is an uncharacterized protein from Pan troglodytes (Chimpanzee).